The sequence spans 523 residues: Putative L-type lectin-domain containing receptor kinase V.6 (523 aa).

The signal sequence occupies residues 1–27 (MFSEVKVLQIVLVQWLTLFSFTYNSHG). Residues 28–242 (TYILDGSAVF…TGSIRALHYM (215 aa)) are legume-lectin like. The Extracellular segment spans residues 28–279 (TYILDGSAVF…KPSDRLRTVL (252 aa)). N-linked (GlcNAc...) asparagine glycans are attached at residues Asn47, Asn59, Asn112, and Asn171. The chain crosses the membrane as a helical span at residues 280-300 (AVCLTLALFAVFLASGIGFVF). The Cytoplasmic segment spans residues 301-523 (YLRHKKVKEV…TGRAVRVKFF (223 aa)). The 189-residue stretch at 335–523 (FKEKQLLGKG…TGRAVRVKFF (189 aa)) folds into the Protein kinase domain. ATP-binding positions include 341–349 (LGKGGFGQV) and Lys364. The active-site Proton acceptor is Asp464.

The protein in the C-terminal section; belongs to the protein kinase superfamily. Ser/Thr protein kinase family. It in the N-terminal section; belongs to the leguminous lectin family.

Its subcellular location is the cell membrane. The catalysed reaction is L-seryl-[protein] + ATP = O-phospho-L-seryl-[protein] + ADP + H(+). It catalyses the reaction L-threonyl-[protein] + ATP = O-phospho-L-threonyl-[protein] + ADP + H(+). In Arabidopsis thaliana (Mouse-ear cress), this protein is Putative L-type lectin-domain containing receptor kinase V.6 (LECRK56).